Consider the following 143-residue polypeptide: UPF0201 protein PAE1632 (143 aa).

This sequence belongs to the UPF0201 family.

This is UPF0201 protein PAE1632 from Pyrobaculum aerophilum (strain ATCC 51768 / DSM 7523 / JCM 9630 / CIP 104966 / NBRC 100827 / IM2).